The sequence spans 227 residues: Probable methylthioribulose-1-phosphate dehydratase (227 aa).

Residue Cys87 coordinates substrate. Zn(2+) is bound by residues His105 and His107. Glu129 (proton donor/acceptor) is an active-site residue. His185 serves as a coordination point for Zn(2+).

It belongs to the aldolase class II family. MtnB subfamily. Zn(2+) is required as a cofactor.

It is found in the cytoplasm. The enzyme catalyses 5-(methylsulfanyl)-D-ribulose 1-phosphate = 5-methylsulfanyl-2,3-dioxopentyl phosphate + H2O. Its pathway is amino-acid biosynthesis; L-methionine biosynthesis via salvage pathway; L-methionine from S-methyl-5-thio-alpha-D-ribose 1-phosphate: step 2/6. Its function is as follows. Catalyzes the dehydration of methylthioribulose-1-phosphate (MTRu-1-P) into 2,3-diketo-5-methylthiopentyl-1-phosphate (DK-MTP-1-P). The protein is Probable methylthioribulose-1-phosphate dehydratase of Drosophila erecta (Fruit fly).